A 507-amino-acid polypeptide reads, in one-letter code: MFS transporter fsa7 (507 aa).

The tract at residues 1–65 (MATKDPAVTT…PDDPEHPLNW (65 aa)) is disordered. N-linked (GlcNAc...) asparagine glycosylation is present at asparagine 64. A helical membrane pass occupies residues 72–92 (LHLVIVSLFTLAANLAATMFA). Asparagine 106 carries an N-linked (GlcNAc...) asparagine glycan. Helical transmembrane passes span 111-131 (AMTV…LAPL), 146-166 (FVYI…MFLV), 169-189 (IICG…VADL), 200-220 (ALFT…GGFV), and 228-248 (WTFR…VIFM). The N-linked (GlcNAc...) asparagine glycan is linked to asparagine 252. Transmembrane regions (helical) follow at residues 302–322 (PIVL…FLLF), 341–361 (GLAY…FSVL), 379–399 (LILM…YGWT), 406–426 (WIVP…VVIP), 429–449 (IYLV…ANLL), and 472–492 (GWGN…PWFF).

Belongs to the major facilitator superfamily.

It is found in the cell membrane. In terms of biological role, efflux pump that might be required for efficient secretion of fusarisetin A or other secondary metabolies produced by the fusarisetin A gene cluster. This is MFS transporter fsa7 from Fusarium sp. (strain FN080326).